The primary structure comprises 912 residues: Protein translocase subunit SecA (912 aa).

ATP is bound by residues Gln-87, 105-109, and Asp-499; that span reads GEGKT. Zn(2+)-binding residues include Cys-897, Cys-899, Cys-908, and His-909.

Belongs to the SecA family. As to quaternary structure, monomer and homodimer. Part of the essential Sec protein translocation apparatus which comprises SecA, SecYEG and auxiliary proteins SecDF-YajC and YidC. Zn(2+) is required as a cofactor.

The protein resides in the cell inner membrane. The protein localises to the cytoplasm. It carries out the reaction ATP + H2O + cellular proteinSide 1 = ADP + phosphate + cellular proteinSide 2.. Its function is as follows. Part of the Sec protein translocase complex. Interacts with the SecYEG preprotein conducting channel. Has a central role in coupling the hydrolysis of ATP to the transfer of proteins into and across the cell membrane, serving both as a receptor for the preprotein-SecB complex and as an ATP-driven molecular motor driving the stepwise translocation of polypeptide chains across the membrane. The sequence is that of Protein translocase subunit SecA from Rhizorhabdus wittichii (strain DSM 6014 / CCUG 31198 / JCM 15750 / NBRC 105917 / EY 4224 / RW1) (Sphingomonas wittichii).